The chain runs to 122 residues: Holo-[acyl-carrier-protein] synthase (122 aa).

Positions 8 and 57 each coordinate Mg(2+).

It belongs to the P-Pant transferase superfamily. AcpS family. Mg(2+) serves as cofactor.

Its subcellular location is the cytoplasm. It catalyses the reaction apo-[ACP] + CoA = holo-[ACP] + adenosine 3',5'-bisphosphate + H(+). In terms of biological role, transfers the 4'-phosphopantetheine moiety from coenzyme A to a Ser of acyl-carrier-protein. This chain is Holo-[acyl-carrier-protein] synthase, found in Exiguobacterium sp. (strain ATCC BAA-1283 / AT1b).